The sequence spans 738 residues: Translation initiation factor IF-2 (738 aa).

Residues 1-10 are compositionally biased toward polar residues; the sequence is MNSMRISGHQ. A disordered region spans residues 1–150; the sequence is MNSMRISGHQ…PTTVRAPVRP (150 aa). The segment covering 22-102 has biased composition (gly residues); that stretch reads AGGGRGPGNP…GGRGPSGGRG (81 aa). Positions 103 to 120 are enriched in basic and acidic residues; that stretch reads GDGRRREESPTDHEDGRI. Residues 121 to 143 show a composition bias toward low complexity; it reads NRSGRSTSTTTTRTSSTLARPTT. The tr-type G domain maps to 238–405; it reads PRPPVVTIMG…MILLVADLNE (168 aa). Residues 247–254 are G1; that stretch reads GHVDHGKT. 247–254 contributes to the GTP binding site; it reads GHVDHGKT. The tract at residues 272 to 276 is G2; the sequence is GITQH. The tract at residues 293–296 is G3; that stretch reads DTPG. Residues 293–297 and 347–350 each bind GTP; these read DTPGH and NKID. The tract at residues 347–350 is G4; that stretch reads NKID. Positions 383-385 are G5; the sequence is SAK.

The protein belongs to the TRAFAC class translation factor GTPase superfamily. Classic translation factor GTPase family. IF-2 subfamily.

Its subcellular location is the cytoplasm. Functionally, one of the essential components for the initiation of protein synthesis. Protects formylmethionyl-tRNA from spontaneous hydrolysis and promotes its binding to the 30S ribosomal subunits. Also involved in the hydrolysis of GTP during the formation of the 70S ribosomal complex. This chain is Translation initiation factor IF-2, found in Roseiflexus castenholzii (strain DSM 13941 / HLO8).